The sequence spans 101 residues: Thyrotropin subunit beta (101 aa).

Cystine bridges form between Cys2-Cys88, Cys10-Cys66, Cys14-Cys68, and Cys71-Cys78. A glycan (N-linked (GlcNAc...) asparagine) is linked at Asn6.

Belongs to the glycoprotein hormones subunit beta family. Heterodimer of a common alpha chain and a unique beta chain which confers biological specificity to thyrotropin, lutropin, follitropin and gonadotropin.

Its subcellular location is the secreted. Its function is as follows. Indispensable for the control of thyroid structure and metabolism. The polypeptide is Thyrotropin subunit beta (TSHB) (Phodopus sungorus (Striped hairy-footed hamster)).